A 955-amino-acid polypeptide reads, in one-letter code: 4-alpha-glucanotransferase DPE2 (955 aa).

M1 bears the N-acetylmethionine mark. CBM20 domains lie at 13-122 (KSSK…LWQS) and 157-270 (SDQD…PWRG). The tract at residues 925 to 955 (SGRSVPANVSGEDINKSRGEVIANGSTKPNP) is disordered.

It belongs to the disproportionating enzyme family.

It localises to the cytoplasm. It is found in the cytosol. It catalyses the reaction Transfers a segment of a (1-&gt;4)-alpha-D-glucan to a new position in an acceptor, which may be glucose or a (1-&gt;4)-alpha-D-glucan.. Its activity is regulated as follows. Inactivated in response to cold stress. In terms of biological role, cytosolic alpha-glucanotransferase essential for the cytosolic metabolism of maltose, an intermediate on the pathway by which starch is converted to sucrose in leaves at night. Metabolizes maltose exported from the chloroplast and is specific for beta-maltose. May play a role in freezing tolerance. Temperature drop induces inactivation of DPE2 that leads to rapid accumulation of maltose, a solute that protects cells from freezing damage. This is 4-alpha-glucanotransferase DPE2 (DPE2) from Arabidopsis thaliana (Mouse-ear cress).